Consider the following 360-residue polypeptide: Hydroxyproline O-arabinosyltransferase RDN2 (360 aa).

Residues 13–33 (VLGSSFATYNLVTMIIHYGSA) traverse the membrane as a helical; Signal-anchor segment.

The protein resides in the golgi apparatus membrane. The enzyme catalyses trans-4-hydroxy-L-prolyl-[protein] + UDP-beta-L-arabinofuranose = O-(beta-L-arabinofuranosyl)-trans-4-hydroxy-L-prolyl-[protein] + UDP + H(+). Functionally, glycosyltransferase involved in the O-arabinosylation of several proteins including extensins and small signaling peptides. Catalyzes the transfer of the initial L-arabinose to the hydroxyl group of Hyp residues. Probably involved in the arabinosylation of CLAVATA3/ESR-related (CLE) signaling peptides that move from root to shoot, to interact with SUNN receptor kinase signaling that regulates nodulation. Involved in long distance nodulation signaling events. Involved in the autoregulation of nodulation (AON), a long distance systemic signaling from root to shoot and back again, which allows legumes to limit the number of root nodules formed based on available nitrogen and previous rhizobial colonization. Functions in the root, upstream of the shoot receptor kinase SUNN and via CLE peptide, to control AON. The protein is Hydroxyproline O-arabinosyltransferase RDN2 of Medicago truncatula (Barrel medic).